Here is a 170-residue protein sequence, read N- to C-terminus: Adenine phosphoribosyltransferase (170 aa).

The protein belongs to the purine/pyrimidine phosphoribosyltransferase family. In terms of assembly, homodimer.

Its subcellular location is the cytoplasm. The enzyme catalyses AMP + diphosphate = 5-phospho-alpha-D-ribose 1-diphosphate + adenine. It participates in purine metabolism; AMP biosynthesis via salvage pathway; AMP from adenine: step 1/1. Functionally, catalyzes a salvage reaction resulting in the formation of AMP, that is energically less costly than de novo synthesis. This Bacillus subtilis (strain 168) protein is Adenine phosphoribosyltransferase.